The primary structure comprises 442 residues: Proline--tRNA ligase (442 aa).

The protein belongs to the class-II aminoacyl-tRNA synthetase family. ProS type 2 subfamily. In terms of assembly, homodimer.

It is found in the cytoplasm. The catalysed reaction is tRNA(Pro) + L-proline + ATP = L-prolyl-tRNA(Pro) + AMP + diphosphate. Functionally, catalyzes the attachment of proline to tRNA(Pro) in a two-step reaction: proline is first activated by ATP to form Pro-AMP and then transferred to the acceptor end of tRNA(Pro). This Brucella suis (strain ATCC 23445 / NCTC 10510) protein is Proline--tRNA ligase.